A 240-amino-acid polypeptide reads, in one-letter code: Proteasome subunit alpha (240 aa).

Belongs to the peptidase T1A family. The 20S proteasome core is composed of 14 alpha and 14 beta subunits that assemble into four stacked heptameric rings, resulting in a barrel-shaped structure. The two inner rings, each composed of seven catalytic beta subunits, are sandwiched by two outer rings, each composed of seven alpha subunits. The catalytic chamber with the active sites is on the inside of the barrel. Has a gated structure, the ends of the cylinder being occluded by the N-termini of the alpha-subunits. Is capped at one or both ends by the proteasome regulatory ATPase, PAN.

Its subcellular location is the cytoplasm. With respect to regulation, the formation of the proteasomal ATPase PAN-20S proteasome complex, via the docking of the C-termini of PAN into the intersubunit pockets in the alpha-rings, triggers opening of the gate for substrate entry. Interconversion between the open-gate and close-gate conformations leads to a dynamic regulation of the 20S proteasome proteolysis activity. In terms of biological role, component of the proteasome core, a large protease complex with broad specificity involved in protein degradation. This chain is Proteasome subunit alpha, found in Metallosphaera sedula (strain ATCC 51363 / DSM 5348 / JCM 9185 / NBRC 15509 / TH2).